The chain runs to 617 residues: Protein fem-1 homolog C (617 aa).

N-acetylmethionine is present on methionine 1. 7 ANK repeats span residues aspartate 2–valine 31, asparagine 40–valine 70, glutamate 82–asparagine 111, threonine 115–valine 144, histidine 148–arginine 177, lysine 181–lysine 210, and tyrosine 213–threonine 242. TPR repeat units follow at residues isoleucine 245 to aspartate 279 and serine 338 to asparagine 371. 2 ANK repeats span residues asparagine 481–valine 523 and aspartate 527–alanine 556.

This sequence belongs to the fem-1 family. In terms of assembly, component of a Cul2-RING (CRL2) E3 ubiquitin-protein ligase complex, also named ECS (Elongin BC-CUL2/5-SOCS-box protein) complex, composed of CUL2, Elongin BC (ELOB and ELOC), RBX1 and substrate-specific adapter FEM1C. As to expression, widely expressed. Highly expressed in kidney, cardiac tissue, skeletal muscle and testis. Expressed at lower levels in other tissues, including cartilage.

It functions in the pathway protein modification; protein ubiquitination. Functionally, substrate-recognition component of a Cul2-RING (CRL2) E3 ubiquitin-protein ligase complex of the DesCEND (destruction via C-end degrons) pathway, which recognizes a C-degron located at the extreme C terminus of target proteins, leading to their ubiquitination and degradation. The C-degron recognized by the DesCEND pathway is usually a motif of less than ten residues and can be present in full-length proteins, truncated proteins or proteolytically cleaved forms. The CRL2(FEM1C) complex specifically recognizes proteins with an arginine at the C-terminus: recognizes and binds proteins ending with -Lys/Arg-Xaa-Arg and -Lys/Arg-Xaa-Xaa-Arg C-degrons, such as SIL1 or OR51B2, leading to their ubiquitination and degradation. The CRL2(FEM1C) complex mediates ubiquitination and degradation of truncated MSRB1/SEPX1 selenoproteins produced by failed UGA/Sec decoding. Promotes ubiquitination and degradation of SLBP. In Homo sapiens (Human), this protein is Protein fem-1 homolog C.